The primary structure comprises 196 residues: 3-isopropylmalate dehydratase small subunit (196 aa).

This sequence belongs to the LeuD family. LeuD type 1 subfamily. As to quaternary structure, heterodimer of LeuC and LeuD.

It catalyses the reaction (2R,3S)-3-isopropylmalate = (2S)-2-isopropylmalate. It functions in the pathway amino-acid biosynthesis; L-leucine biosynthesis; L-leucine from 3-methyl-2-oxobutanoate: step 2/4. Functionally, catalyzes the isomerization between 2-isopropylmalate and 3-isopropylmalate, via the formation of 2-isopropylmaleate. The sequence is that of 3-isopropylmalate dehydratase small subunit from Streptococcus sanguinis (strain SK36).